A 582-amino-acid polypeptide reads, in one-letter code: Aspartate--tRNA(Asp/Asn) ligase (582 aa).

Position 177 (Glu177) interacts with L-aspartate. The aspartate stretch occupies residues 201–204; the sequence is QLFK. Arg223 contacts L-aspartate. Residues 223 to 225 and Gln232 each bind ATP; that span reads RDE. His447 is an L-aspartate binding site. Glu481 provides a ligand contact to ATP. Arg488 contacts L-aspartate. An ATP-binding site is contributed by 533–536; it reads GLDR.

Belongs to the class-II aminoacyl-tRNA synthetase family. Type 1 subfamily. Homodimer.

The protein localises to the cytoplasm. It catalyses the reaction tRNA(Asx) + L-aspartate + ATP = L-aspartyl-tRNA(Asx) + AMP + diphosphate. In terms of biological role, aspartyl-tRNA synthetase with relaxed tRNA specificity since it is able to aspartylate not only its cognate tRNA(Asp) but also tRNA(Asn). Reaction proceeds in two steps: L-aspartate is first activated by ATP to form Asp-AMP and then transferred to the acceptor end of tRNA(Asp/Asn). The sequence is that of Aspartate--tRNA(Asp/Asn) ligase from Chlamydia muridarum (strain MoPn / Nigg).